The chain runs to 118 residues: UPF0102 protein Nwi_0116 (118 aa).

This sequence belongs to the UPF0102 family.

This is UPF0102 protein Nwi_0116 from Nitrobacter winogradskyi (strain ATCC 25391 / DSM 10237 / CIP 104748 / NCIMB 11846 / Nb-255).